We begin with the raw amino-acid sequence, 137 residues long: Large ribosomal subunit protein uL16 (137 aa).

It belongs to the universal ribosomal protein uL16 family. Part of the 50S ribosomal subunit.

Binds 23S rRNA and is also seen to make contacts with the A and possibly P site tRNAs. The sequence is that of Large ribosomal subunit protein uL16 from Streptococcus thermophilus (strain ATCC BAA-491 / LMD-9).